The chain runs to 232 residues: Ribonuclease 3 (232 aa).

Residues 6–133 form the RNase III domain; the sequence is FNDIENRLGV…VIAAVYLDKG (128 aa). Position 46 (Glu46) interacts with Mg(2+). Residue Asp50 is part of the active site. Residues Asp119 and Glu122 each coordinate Mg(2+). Residue Glu122 is part of the active site. A DRBM domain is found at 160–229; the sequence is DFKTKLQELL…AKEALKRLEK (70 aa).

The protein belongs to the ribonuclease III family. In terms of assembly, homodimer. It depends on Mg(2+) as a cofactor.

It is found in the cytoplasm. It carries out the reaction Endonucleolytic cleavage to 5'-phosphomonoester.. In terms of biological role, digests double-stranded RNA. Involved in the processing of primary rRNA transcript to yield the immediate precursors to the large and small rRNAs (23S and 16S). Processes some mRNAs, and tRNAs when they are encoded in the rRNA operon. Processes pre-crRNA and tracrRNA of type II CRISPR loci if present in the organism. This is Ribonuclease 3 from Clostridium botulinum (strain Eklund 17B / Type B).